The primary structure comprises 567 residues: MNYKKYKGYETIVLEDRNWPSRKIEKAPQWCSVDLRDGNQALITPMGLKQKLRFFEYLVKMGFKTIEIGFPAASDTEYEFTRTLIEEGYIPEDVTIQVLTQSRIQIINKTFEALKGTKNAVVHLYNSTSTLQREVVFRNSKEETIELAVFGARAIKELALKNPETNFTFEYSPESFTGTEMDFAAEICNSVIDVWKPTKDKKVIINLPSTVEMATPNTYADQIEYMCRNLKSRENIIVSLHAHNDRGTGVAATELGLMAGADRVEGTLFGNGERTGNADILNLGMNLYTQGINPELDFSDINSMIEIYEESTAMNVHPRHPYAGDLVFTAFSGSHQDAIKKGMARMNKQAQYWEVPYLPLDPKDIGKSYEPIIRINSQSGKGGVSFILEQNYGLYIPKDFQKDAGRVITAYSDKMQTEIGAEEIYEVFLNEYVDIRTPLQLNYHKTQSVDSDWDLVFIEAEIEYNMQKHYVQAEGNGVVSAFCNSLKEIIGMDIDIVDYRGHSMEYGTKAKAISYIELKNETGERFYGAGTSSSVGKSSLRAVVSAINKMILAQQTKDMDTQEEDIA.

The Pyruvate carboxyltransferase domain maps to 28 to 302 (PQWCSVDLRD…NPELDFSDIN (275 aa)). Asp37, His241, His243, and Asn277 together coordinate Mg(2+). Residues 435 to 567 (IRTPLQLNYH…DMDTQEEDIA (133 aa)) are regulatory domain.

Belongs to the alpha-IPM synthase/homocitrate synthase family. LeuA type 2 subfamily. As to quaternary structure, homodimer. Mg(2+) serves as cofactor.

The protein resides in the cytoplasm. It catalyses the reaction 3-methyl-2-oxobutanoate + acetyl-CoA + H2O = (2S)-2-isopropylmalate + CoA + H(+). The protein operates within amino-acid biosynthesis; L-leucine biosynthesis; L-leucine from 3-methyl-2-oxobutanoate: step 1/4. Functionally, catalyzes the condensation of the acetyl group of acetyl-CoA with 3-methyl-2-oxobutanoate (2-ketoisovalerate) to form 3-carboxy-3-hydroxy-4-methylpentanoate (2-isopropylmalate). The chain is 2-isopropylmalate synthase from Acetoanaerobium sticklandii (strain ATCC 12662 / DSM 519 / JCM 1433 / CCUG 9281 / NCIMB 10654 / HF) (Clostridium sticklandii).